The chain runs to 407 residues: Proteasome-activating nucleotidase (407 aa).

Residues 22 to 67 adopt a coiled-coil conformation; sequence KEKTQIAELESKVLRLELKNKDINRENVQIKKENEILKRELDKLRI. ATP contacts are provided by residues 192 to 197 and histidine 331; that span reads GTGKTL. Residues 405–407 are docks into pockets in the proteasome alpha-ring to cause gate opening; it reads MYG.

Belongs to the AAA ATPase family. Homohexamer. The hexameric complex has a two-ring architecture resembling a top hat that caps the 20S proteasome core at one or both ends. Upon ATP-binding, the C-terminus of PAN interacts with the alpha-rings of the proteasome core by binding to the intersubunit pockets.

It is found in the cytoplasm. ATPase which is responsible for recognizing, binding, unfolding and translocation of substrate proteins into the archaeal 20S proteasome core particle. Is essential for opening the gate of the 20S proteasome via an interaction with its C-terminus, thereby allowing substrate entry and access to the site of proteolysis. Thus, the C-termini of the proteasomal ATPase function like a 'key in a lock' to induce gate opening and therefore regulate proteolysis. Unfolding activity requires energy from ATP hydrolysis, whereas ATP binding alone promotes ATPase-20S proteasome association which triggers gate opening, and supports translocation of unfolded substrates. The sequence is that of Proteasome-activating nucleotidase from Methanococcus maripaludis (strain DSM 14266 / JCM 13030 / NBRC 101832 / S2 / LL).